The sequence spans 189 residues: Dual specificity phosphatase 29 (189 aa).

Positions 33–182 (HVNEVWPGVY…LRELDTHLQE (150 aa)) constitute a Tyrosine-protein phosphatase domain. Residue 126-133 (HCVMGRSR) coordinates substrate. The Phosphocysteine intermediate role is filled by C127.

This sequence belongs to the protein-tyrosine phosphatase family. Non-receptor class dual specificity subfamily.

It is found in the cytoplasm. The protein resides in the nucleus. The catalysed reaction is O-phospho-L-tyrosyl-[protein] + H2O = L-tyrosyl-[protein] + phosphate. It carries out the reaction O-phospho-L-seryl-[protein] + H2O = L-seryl-[protein] + phosphate. The enzyme catalyses O-phospho-L-threonyl-[protein] + H2O = L-threonyl-[protein] + phosphate. Dual specificity phosphatase able to dephosphorylate phosphotyrosine, phosphoserine and phosphothreonine residues within the same substrate, with a preference for phosphotyrosine as a substrate. Involved in the modulation of AMPK and MAPK1/2 signaling pathways. The protein is Dual specificity phosphatase 29 (dusp29) of Danio rerio (Zebrafish).